The following is a 505-amino-acid chain: 4-alpha-glucanotransferase (505 aa).

It belongs to the disproportionating enzyme family.

The protein resides in the cytoplasm. The catalysed reaction is Transfers a segment of a (1-&gt;4)-alpha-D-glucan to a new position in an acceptor, which may be glucose or a (1-&gt;4)-alpha-D-glucan.. This is 4-alpha-glucanotransferase (malQ) from Synechocystis sp. (strain ATCC 27184 / PCC 6803 / Kazusa).